The sequence spans 141 residues: Large ribosomal subunit protein uL11A (141 aa).

The protein belongs to the universal ribosomal protein uL11 family. Part of the ribosomal stalk of the 50S ribosomal subunit. Interacts with L10 and the large rRNA to form the base of the stalk. L10 forms an elongated spine to which L12 dimers bind in a sequential fashion forming a multimeric L10(L12)X complex. One or more lysine residues are methylated.

Functionally, forms part of the ribosomal stalk which helps the ribosome interact with GTP-bound translation factors. In Halalkalibacterium halodurans (strain ATCC BAA-125 / DSM 18197 / FERM 7344 / JCM 9153 / C-125) (Bacillus halodurans), this protein is Large ribosomal subunit protein uL11A.